Reading from the N-terminus, the 197-residue chain is ATP-dependent Clp protease proteolytic subunit 1 (197 aa).

S96 serves as the catalytic Nucleophile. Residue H121 is part of the active site.

Belongs to the peptidase S14 family. As to quaternary structure, fourteen ClpP subunits assemble into 2 heptameric rings which stack back to back to give a disk-like structure with a central cavity, resembling the structure of eukaryotic proteasomes.

The protein resides in the cytoplasm. It catalyses the reaction Hydrolysis of proteins to small peptides in the presence of ATP and magnesium. alpha-casein is the usual test substrate. In the absence of ATP, only oligopeptides shorter than five residues are hydrolyzed (such as succinyl-Leu-Tyr-|-NHMec, and Leu-Tyr-Leu-|-Tyr-Trp, in which cleavage of the -Tyr-|-Leu- and -Tyr-|-Trp bonds also occurs).. In terms of biological role, cleaves peptides in various proteins in a process that requires ATP hydrolysis. Has a chymotrypsin-like activity. Plays a major role in the degradation of misfolded proteins. The sequence is that of ATP-dependent Clp protease proteolytic subunit 1 from Synechococcus sp. (strain ATCC 27144 / PCC 6301 / SAUG 1402/1) (Anacystis nidulans).